Here is a 398-residue protein sequence, read N- to C-terminus: Protein ELC (398 aa).

The UEV domain occupies 18–162; it reads ALSQRGPSSV…ARDPPLYSRR (145 aa). Positions 157 to 202 are disordered; that stretch reads PLYSRRRPQPPPPSPPTVYDSSLSRPPSADQSLPRPFPPSPYGGGV. The segment covering 175–187 has biased composition (polar residues); sequence YDSSLSRPPSADQ. A coiled-coil region spans residues 247 to 291; the sequence is EAEAEELLSLQAGLKRREDELNIGLKEMVEEKETLEQQLQIISMN. The SB domain occupies 322-390; the sequence is DTLSKQMLEC…RAAQMEVQVA (69 aa).

It belongs to the ubiquitin-conjugating enzyme family. UEV subfamily. As to quaternary structure, component of the endosomal sorting required for transport complex I (ESCRT-I), composed of ELC, VPS28 and VPS37. Interacts with VPS28 and VPS37. Binds ubiquitin in vitro. Interacts with FREE1. Interacts with TOL9/TOM1D. Interacts with BRO1/ALIX. Interacts with SINAT1, SINAT2, SINAT3 and SINAT4. Post-translationally, ubiquitinated by SINAT1, SINAT2, SINAT3 and SINAT4 for subsequent proteasomal degradation. Expressed in roots, stems, leaves and flowers.

The protein localises to the early endosome. It localises to the late endosome. The protein resides in the prevacuolar compartment. In terms of biological role, component of the ESCRT-I complex (endosomal sorting complex required for transport I), a regulator of vesicular trafficking process. Required for the sorting of endocytic ubiquitinated cargos into multivesicular bodies (MVBs). May control nuclear division through the microtubule cytoskeleton. The polypeptide is Protein ELC (Arabidopsis thaliana (Mouse-ear cress)).